We begin with the raw amino-acid sequence, 294 residues long: Indole-3-glycerol phosphate synthase (294 aa).

This sequence belongs to the TrpC family.

It catalyses the reaction 1-(2-carboxyphenylamino)-1-deoxy-D-ribulose 5-phosphate + H(+) = (1S,2R)-1-C-(indol-3-yl)glycerol 3-phosphate + CO2 + H2O. It functions in the pathway amino-acid biosynthesis; L-tryptophan biosynthesis; L-tryptophan from chorismate: step 4/5. The protein is Indole-3-glycerol phosphate synthase of Synechococcus sp. (strain RCC307).